Reading from the N-terminus, the 283-residue chain is Phosphatidylglycerol--prolipoprotein diacylglyceryl transferase (283 aa).

The next 4 helical transmembrane spans lie at Ile-19–Val-39, Leu-59–Gln-79, Ile-90–Ala-110, and Val-120–Gly-140. Arg-141 provides a ligand contact to a 1,2-diacyl-sn-glycero-3-phospho-(1'-sn-glycerol). Transmembrane regions (helical) follow at residues Thr-181–Phe-201, Val-212–Gly-232, and Ile-245–Tyr-265.

Belongs to the Lgt family.

The protein resides in the cell inner membrane. It carries out the reaction L-cysteinyl-[prolipoprotein] + a 1,2-diacyl-sn-glycero-3-phospho-(1'-sn-glycerol) = an S-1,2-diacyl-sn-glyceryl-L-cysteinyl-[prolipoprotein] + sn-glycerol 1-phosphate + H(+). It participates in protein modification; lipoprotein biosynthesis (diacylglyceryl transfer). Functionally, catalyzes the transfer of the diacylglyceryl group from phosphatidylglycerol to the sulfhydryl group of the N-terminal cysteine of a prolipoprotein, the first step in the formation of mature lipoproteins. The chain is Phosphatidylglycerol--prolipoprotein diacylglyceryl transferase from Nostoc sp. (strain PCC 7120 / SAG 25.82 / UTEX 2576).